The following is a 471-amino-acid chain: 3-isopropylmalate dehydratase large subunit (471 aa).

[4Fe-4S] cluster-binding residues include Cys347, Cys407, and Cys410.

This sequence belongs to the aconitase/IPM isomerase family. LeuC type 1 subfamily. In terms of assembly, heterodimer of LeuC and LeuD. Requires [4Fe-4S] cluster as cofactor.

The enzyme catalyses (2R,3S)-3-isopropylmalate = (2S)-2-isopropylmalate. It functions in the pathway amino-acid biosynthesis; L-leucine biosynthesis; L-leucine from 3-methyl-2-oxobutanoate: step 2/4. In terms of biological role, catalyzes the isomerization between 2-isopropylmalate and 3-isopropylmalate, via the formation of 2-isopropylmaleate. This Geobacillus thermodenitrificans (strain NG80-2) protein is 3-isopropylmalate dehydratase large subunit.